The primary structure comprises 410 residues: Aspartate aminotransferase (410 aa).

L-aspartate contacts are provided by glycine 47, tryptophan 135, and asparagine 185. At lysine 249 the chain carries N6-(pyridoxal phosphate)lysine. Arginine 385 is an L-aspartate binding site.

Belongs to the class-I pyridoxal-phosphate-dependent aminotransferase family. As to quaternary structure, homodimer. Pyridoxal 5'-phosphate serves as cofactor.

Its subcellular location is the cytoplasm. The catalysed reaction is L-aspartate + 2-oxoglutarate = oxaloacetate + L-glutamate. The enzyme catalyses L-2-aminoadipate + 2-oxoglutarate = 2-oxoadipate + L-glutamate. In terms of biological role, catalyzes the reversible conversion of aspartate and 2-oxoglutarate to glutamate and oxaloacetate. Genetic evidence shows that this protein is involved in L-lysine catabolism. It may have 2-aminoadipate:2-oxoglutarate aminotransferase activity. This Rhizobium meliloti (strain 1021) (Ensifer meliloti) protein is Aspartate aminotransferase (aatB).